The following is a 66-amino-acid chain: Large ribosomal subunit protein uL29 (66 aa).

Belongs to the universal ribosomal protein uL29 family.

The protein is Large ribosomal subunit protein uL29 of Rhizobium leguminosarum bv. trifolii (strain WSM2304).